The sequence spans 84 residues: Molybdopterin synthase sulfur carrier subunit (84 aa).

Position 84 is a 1-thioglycine; alternate (glycine 84). Glycyl adenylate; alternate is present on glycine 84.

This sequence belongs to the MoaD family. MOCS2A subfamily. Heterotetramer; composed of 2 small (MOCS2A) and 2 large (MOCS2B) subunits. Post-translationally, C-terminal thiocarboxylation occurs in 2 steps, it is first acyl-adenylated (-COAMP) via the hesA/moeB/thiF part of MOCS3, then thiocarboxylated (-COSH) via the rhodanese domain of MOCS3.

It is found in the cytoplasm. Its pathway is cofactor biosynthesis; molybdopterin biosynthesis. Its function is as follows. Acts as a sulfur carrier required for molybdopterin biosynthesis. Component of the molybdopterin synthase complex that catalyzes the conversion of precursor Z into molybdopterin by mediating the incorporation of 2 sulfur atoms into precursor Z to generate a dithiolene group. In the complex, serves as sulfur donor by being thiocarboxylated (-COSH) at its C-terminus by MOCS3. After interaction with MOCS2B, the sulfur is then transferred to precursor Z to form molybdopterin. In Caenorhabditis elegans, this protein is Molybdopterin synthase sulfur carrier subunit.